We begin with the raw amino-acid sequence, 248 residues long: UDP-2,3-diacylglucosamine hydrolase (248 aa).

5 residues coordinate Mn(2+): D7, H9, D40, N78, and H113. 78 to 79 (NR) is a binding site for substrate. Residues D121, S159, T163, K166, and H194 each coordinate substrate. 2 residues coordinate Mn(2+): H194 and H196.

This sequence belongs to the LpxH family. It depends on Mn(2+) as a cofactor.

It is found in the cell inner membrane. The enzyme catalyses UDP-2-N,3-O-bis[(3R)-3-hydroxytetradecanoyl]-alpha-D-glucosamine + H2O = 2-N,3-O-bis[(3R)-3-hydroxytetradecanoyl]-alpha-D-glucosaminyl 1-phosphate + UMP + 2 H(+). It participates in glycolipid biosynthesis; lipid IV(A) biosynthesis; lipid IV(A) from (3R)-3-hydroxytetradecanoyl-[acyl-carrier-protein] and UDP-N-acetyl-alpha-D-glucosamine: step 4/6. Functionally, hydrolyzes the pyrophosphate bond of UDP-2,3-diacylglucosamine to yield 2,3-diacylglucosamine 1-phosphate (lipid X) and UMP by catalyzing the attack of water at the alpha-P atom. Involved in the biosynthesis of lipid A, a phosphorylated glycolipid that anchors the lipopolysaccharide to the outer membrane of the cell. The protein is UDP-2,3-diacylglucosamine hydrolase of Pseudomonas savastanoi pv. phaseolicola (strain 1448A / Race 6) (Pseudomonas syringae pv. phaseolicola (strain 1448A / Race 6)).